The sequence spans 216 residues: Octanoyltransferase (216 aa).

A BPL/LPL catalytic domain is found at serine 31–glutamine 205. Substrate contacts are provided by residues arginine 70–histidine 77, serine 137–glycine 139, and glycine 150–alanine 152. Residue cysteine 168 is the Acyl-thioester intermediate of the active site.

It belongs to the LipB family.

It localises to the cytoplasm. The enzyme catalyses octanoyl-[ACP] + L-lysyl-[protein] = N(6)-octanoyl-L-lysyl-[protein] + holo-[ACP] + H(+). It participates in protein modification; protein lipoylation via endogenous pathway; protein N(6)-(lipoyl)lysine from octanoyl-[acyl-carrier-protein]: step 1/2. Functionally, catalyzes the transfer of endogenously produced octanoic acid from octanoyl-acyl-carrier-protein onto the lipoyl domains of lipoate-dependent enzymes. Lipoyl-ACP can also act as a substrate although octanoyl-ACP is likely to be the physiological substrate. The protein is Octanoyltransferase of Vibrio cholerae serotype O1 (strain ATCC 39541 / Classical Ogawa 395 / O395).